The chain runs to 483 residues: Homoserine O-acetyltransferase (483 aa).

Residues 47–346 (NVILICHALT…HFGHDAFLLE (300 aa)) form the AB hydrolase-1 domain. S152 functions as the Nucleophile in the catalytic mechanism. R221 is a binding site for substrate. Active-site residues include D307 and H340. D341 serves as a coordination point for substrate. 2 CBS domains span residues 367 to 423 (MSED…KISS) and 428 to 483 (LSRD…KGTK).

Belongs to the AB hydrolase superfamily. MetX family. In terms of assembly, homodimer.

Its subcellular location is the cytoplasm. The enzyme catalyses L-homoserine + acetyl-CoA = O-acetyl-L-homoserine + CoA. It participates in amino-acid biosynthesis; L-methionine biosynthesis via de novo pathway; O-acetyl-L-homoserine from L-homoserine: step 1/1. Functionally, transfers an acetyl group from acetyl-CoA to L-homoserine, forming acetyl-L-homoserine. This chain is Homoserine O-acetyltransferase, found in Methanohalophilus mahii (strain ATCC 35705 / DSM 5219 / SLP).